A 275-amino-acid chain; its full sequence is Large ribosomal subunit protein uL2 (275 aa).

Residues 222–275 (GVAMNPVDHPHGGGEGRNKGRHPTSPWGQKSKGLKTRNNKRTDSMIIRRRAKKK) are disordered. Residues 229–239 (DHPHGGGEGRN) show a composition bias toward basic and acidic residues.

Belongs to the universal ribosomal protein uL2 family. In terms of assembly, part of the 50S ribosomal subunit. Forms a bridge to the 30S subunit in the 70S ribosome.

Its function is as follows. One of the primary rRNA binding proteins. Required for association of the 30S and 50S subunits to form the 70S ribosome, for tRNA binding and peptide bond formation. It has been suggested to have peptidyltransferase activity; this is somewhat controversial. Makes several contacts with the 16S rRNA in the 70S ribosome. This chain is Large ribosomal subunit protein uL2, found in Psychrobacter arcticus (strain DSM 17307 / VKM B-2377 / 273-4).